A 75-amino-acid polypeptide reads, in one-letter code: Protein B (75 aa).

This Dicentrarchus labrax (European seabass) protein is Protein B.